Reading from the N-terminus, the 223-residue chain is Holliday junction branch migration complex subunit RuvA (223 aa).

The domain I stretch occupies residues 1–64; it reads MIGRIAGVIL…EDLLQLFGFP (64 aa). A domain II region spans residues 65-143; sequence TLLEKEWHRL…AVMALGGALT (79 aa). Residues 144-169 are flexible linker; it reads VDPGPLPEVELVEAAVPAPVPAKAAP. The tract at residues 170–223 is domain III; that stretch reads SSAQATADALSALGNLGYAPSEAASAVAEAAAREPAAPTAALIRAALRLLAPKE.

The protein belongs to the RuvA family. Homotetramer. Forms an RuvA(8)-RuvB(12)-Holliday junction (HJ) complex. HJ DNA is sandwiched between 2 RuvA tetramers; dsDNA enters through RuvA and exits via RuvB. An RuvB hexamer assembles on each DNA strand where it exits the tetramer. Each RuvB hexamer is contacted by two RuvA subunits (via domain III) on 2 adjacent RuvB subunits; this complex drives branch migration. In the full resolvosome a probable DNA-RuvA(4)-RuvB(12)-RuvC(2) complex forms which resolves the HJ.

The protein localises to the cytoplasm. Its function is as follows. The RuvA-RuvB-RuvC complex processes Holliday junction (HJ) DNA during genetic recombination and DNA repair, while the RuvA-RuvB complex plays an important role in the rescue of blocked DNA replication forks via replication fork reversal (RFR). RuvA specifically binds to HJ cruciform DNA, conferring on it an open structure. The RuvB hexamer acts as an ATP-dependent pump, pulling dsDNA into and through the RuvAB complex. HJ branch migration allows RuvC to scan DNA until it finds its consensus sequence, where it cleaves and resolves the cruciform DNA. This chain is Holliday junction branch migration complex subunit RuvA, found in Paracoccus denitrificans (strain Pd 1222).